The primary structure comprises 274 residues: Basic leucine zipper transcriptional factor ATF-like 2 (274 aa).

3 disordered regions span residues 1–47, 128–151, and 187–229; these read MHLC…ALHQ, GSCYPAQPLSPGPQPHDSPSLLQC, and GSSS…PSSA. A bZIP domain is found at 17–80; the sequence is EQQRQLKKQK…AWWSRTLHVH (64 aa). Residues 20–41 are basic motif; the sequence is RQLKKQKNRAAAQRSRQKHTDK. Over residues 37–47 the composition is skewed to basic and acidic residues; that stretch reads KHTDKADALHQ. The segment at 45–66 is leucine-zipper; that stretch reads LHQQHESLEKDNLALRKEIQSL. Over residues 187–196 the composition is skewed to low complexity; it reads GSSSKLSALQ.

Belongs to the bZIP family. Heterodimer; heterodimerizes with JUN family proteins.

Its subcellular location is the nucleus. In terms of biological role, AP-1 family transcription factor that controls the differentiation of lineage-specific cells in the immune system. Following infection, participates in the differentiation of CD8(+) thymic conventional dendritic cells in the immune system. Acts via the formation of a heterodimer with JUN family proteins that recognizes and binds DNA sequence 5'-TGA[CG]TCA-3' and regulates expression of target genes. Selectively suppresses CCN1 transcription and hence blocks the downstream cell proliferation signals produced by CCN1 and inhibits CCN1-induced anchorage-independent growth and invasion in several cancer types, such as breast cancer, malignant glioma and metastatic melanoma. Possibly acts by interfering with AP-1 binding to CCN1 promoter. In Homo sapiens (Human), this protein is Basic leucine zipper transcriptional factor ATF-like 2 (BATF2).